A 133-amino-acid chain; its full sequence is uncharacterized protein (133 aa).

The protein belongs to the ycf68 family.

It localises to the plastid. The protein localises to the chloroplast. This is an uncharacterized protein from Oryza sativa subsp. japonica (Rice).